A 210-amino-acid chain; its full sequence is Guanylate kinase (210 aa).

The 181-residue stretch at 23 to 203 (GRVVVLSGPS…ACAELVSLLV (181 aa)) folds into the Guanylate kinase-like domain. ATP is bound at residue 30–37 (GPSAVGKS).

It belongs to the guanylate kinase family.

It localises to the cytoplasm. It catalyses the reaction GMP + ATP = GDP + ADP. In terms of biological role, essential for recycling GMP and indirectly, cGMP. The protein is Guanylate kinase (gmk) of Mycobacterium leprae (strain TN).